We begin with the raw amino-acid sequence, 420 residues long: MIDLRLLRDDPERLRASQRARGEDPGLVDAALAADENRRAAVARFEALRAEQKALGRRIASAPPDEKPALLDRAKELAELVKAAEAARDDADAACREALLAISNLVDDEAPRGGEEDFVVLEEIGTPPTFSFPPRDHLELGERLGAIDVERAAKVSGSRFYYLTGVGALLEFALVDLALRQAVTAGFVPVIPPVLVRPPAMEGTGFLGQAAENVFHLEKDDFYLVGTSEVSLAAYHMGEILDAAQLPRRYVGFSTCFRREAGSHGKDTRGIIRVHQFDKVEMFSFTTVGEAAAEHRRLLEWEKQFLTALEIPFRVIDVATGDLGASAARKFDCEAWIPTQGRYREVTSTSNCTEFQARRLDIRMRDEQGIRPLATLNGTLVAIPRTIVAVLENHQQADGSVVVPRALRDYLGTDVLRPKR.

An L-serine-binding site is contributed by 227 to 229 (TSE). ATP contacts are provided by residues 258–260 (RRE) and Val-274. Residue Glu-281 coordinates L-serine. 345-348 (EVTS) serves as a coordination point for ATP. Thr-379 is a binding site for L-serine.

The protein belongs to the class-II aminoacyl-tRNA synthetase family. Type-1 seryl-tRNA synthetase subfamily. Homodimer. The tRNA molecule binds across the dimer.

Its subcellular location is the cytoplasm. The enzyme catalyses tRNA(Ser) + L-serine + ATP = L-seryl-tRNA(Ser) + AMP + diphosphate + H(+). It catalyses the reaction tRNA(Sec) + L-serine + ATP = L-seryl-tRNA(Sec) + AMP + diphosphate + H(+). The protein operates within aminoacyl-tRNA biosynthesis; selenocysteinyl-tRNA(Sec) biosynthesis; L-seryl-tRNA(Sec) from L-serine and tRNA(Sec): step 1/1. Functionally, catalyzes the attachment of serine to tRNA(Ser). Is also able to aminoacylate tRNA(Sec) with serine, to form the misacylated tRNA L-seryl-tRNA(Sec), which will be further converted into selenocysteinyl-tRNA(Sec). The sequence is that of Serine--tRNA ligase from Acidothermus cellulolyticus (strain ATCC 43068 / DSM 8971 / 11B).